We begin with the raw amino-acid sequence, 561 residues long: Lysine--tRNA ligase (561 aa).

Residues Glu-409 and Glu-416 each contribute to the Mg(2+) site.

It belongs to the class-II aminoacyl-tRNA synthetase family. As to quaternary structure, homodimer. It depends on Mg(2+) as a cofactor.

It is found in the cytoplasm. The enzyme catalyses tRNA(Lys) + L-lysine + ATP = L-lysyl-tRNA(Lys) + AMP + diphosphate. The polypeptide is Lysine--tRNA ligase (Nostoc punctiforme (strain ATCC 29133 / PCC 73102)).